We begin with the raw amino-acid sequence, 232 residues long: Large ribosomal subunit protein uL1 (232 aa).

Belongs to the universal ribosomal protein uL1 family. In terms of assembly, part of the 50S ribosomal subunit.

Binds directly to 23S rRNA. The L1 stalk is quite mobile in the ribosome, and is involved in E site tRNA release. Functionally, protein L1 is also a translational repressor protein, it controls the translation of the L11 operon by binding to its mRNA. The protein is Large ribosomal subunit protein uL1 of Paraburkholderia phytofirmans (strain DSM 17436 / LMG 22146 / PsJN) (Burkholderia phytofirmans).